We begin with the raw amino-acid sequence, 95 residues long: Co-chaperonin GroES (95 aa).

The disordered stretch occupies residues 20–45; it reads KTKGGLIIPDSAKEKPAEGEITSVGE.

The protein belongs to the GroES chaperonin family. As to quaternary structure, heptamer of 7 subunits arranged in a ring. Interacts with the chaperonin GroEL.

It localises to the cytoplasm. Together with the chaperonin GroEL, plays an essential role in assisting protein folding. The GroEL-GroES system forms a nano-cage that allows encapsulation of the non-native substrate proteins and provides a physical environment optimized to promote and accelerate protein folding. GroES binds to the apical surface of the GroEL ring, thereby capping the opening of the GroEL channel. In Paracoccus denitrificans, this protein is Co-chaperonin GroES.